Reading from the N-terminus, the 491-residue chain is MAGRGGELTEALVKKTGREEEDELGMKEKVWIESKKLWVVAAPAIFTRYSTFGVSMVTQAFIGHLGPTELAAYSITFTILLRFSNGILLGMAGALGTLCGQAYGAKQYQMLGIYLQRSWIVLTGGTICLMPVFIFAGPILLALGQEERIVRVARVLALWVIGINFSFVPSFTCQMFLQAQSKNKIISYVTAVSLGLHVFFSWLLVAHFNFGITGAMTSMLIAFWLPIIVQLLYVTCGGCKDTWRGFSMLAFKDLWPVLKLSLSSGGMLCLELWYNSVLVLLTGNLKNAEVALDALAICISINALEMMIALGFLAAVSVRVSNELGSGNPKGAKFATLIAVFTSLSIGIVLFFVFLFLRGRISYIFTTSEAVAAEVADLSPLLAFSILLNSVQPVLSGVAIGAGWQGYVAYVNLACYYLVGIPIGVILGYVVGLQVKGVWIGMLFGIFVQTCVLTVMTLRTDWDQQVSTSLRNINRWVVPESRDANQISSEE.

Transmembrane regions (helical) follow at residues 37-57, 75-95, 120-140, 156-176, 185-205, 214-234, 265-285, 296-316, 337-357, 381-401, 413-433, and 438-458; these read LWVV…VSMV, ITFT…AGAL, IVLT…GPIL, LALW…CQMF, IISY…WLLV, GAMT…LLYV, GGML…TGNL, AICI…LAAV, LIAV…FLFL, LLAF…VAIG, LACY…VVGL, and VWIG…VMTL.

Belongs to the multi antimicrobial extrusion (MATE) (TC 2.A.66.1) family.

The protein resides in the membrane. This chain is Protein DETOXIFICATION 20, found in Arabidopsis thaliana (Mouse-ear cress).